The chain runs to 505 residues: MRWITRPGWPGNLLALAAGASTLLALAPFDIWPLAVLSIAVLYLGLRELSPRQAMWRGWWFGFGLYGAGTWWIYVSMNTYGGASPLLAIVLLLAFFAALAWFFALPTWLWARWLRRNEAPLADALCFAALWLLQEAFRGWFLTGFPWLYAGYSQLDGPLAGLAPLGGVWLISFTLALTAALLCNLHRLRPRPSFLAVASVLLLAPWGLGLALKGHAWTIPAGDPLKVAAIQGNVEQDLKWDPAHIDAQLALYRDLSFSSRPVDLLVWPETAVPVLKDQAQGYIDVMGRFAAERHSALITGVPVREEVHHQRRYYNGITVTGEGDGTYLKQKLVPFGEYVPLQDVLRGAIEFFNLPMSDFARGPEDQPLLQAKGYQIAPYICYEVVYPEFAAGLAARSDLLLTISNDTWFGKSIGPLQHLQMAQMRALEAGRWMIRATNNGVTALIDPFGRITTQIPQFQQAVLYGEVVPMQQLTPYLQWRSWPLAIVCALLLGWALLAGRIAKTV.

6 helical membrane-spanning segments follow: residues 23-43 (LLAL…AVLY), 58-78 (GWWF…VSMN), 85-105 (PLLA…FFAL), 125-145 (LCFA…LTGF), 162-182 (LAPL…AALL), and 192-212 (PSFL…GLAL). Residues 230–469 (IQGNVEQDLK…QAVLYGEVVP (240 aa)) enclose the CN hydrolase domain. Residue glutamate 269 is the Proton acceptor of the active site. Lysine 329 is a catalytic residue. Residue cysteine 381 is the Nucleophile of the active site. A helical membrane pass occupies residues 482–502 (WPLAIVCALLLGWALLAGRIA).

This sequence belongs to the CN hydrolase family. Apolipoprotein N-acyltransferase subfamily.

Its subcellular location is the cell inner membrane. The catalysed reaction is N-terminal S-1,2-diacyl-sn-glyceryl-L-cysteinyl-[lipoprotein] + a glycerophospholipid = N-acyl-S-1,2-diacyl-sn-glyceryl-L-cysteinyl-[lipoprotein] + a 2-acyl-sn-glycero-3-phospholipid + H(+). The protein operates within protein modification; lipoprotein biosynthesis (N-acyl transfer). In terms of biological role, catalyzes the phospholipid dependent N-acylation of the N-terminal cysteine of apolipoprotein, the last step in lipoprotein maturation. This chain is Apolipoprotein N-acyltransferase, found in Pseudomonas putida (strain ATCC 47054 / DSM 6125 / CFBP 8728 / NCIMB 11950 / KT2440).